The chain runs to 256 residues: Pimeloyl-[acyl-carrier protein] methyl ester esterase (256 aa).

One can recognise an AB hydrolase-1 domain in the interval 15–242; it reads HLVLLHGWGL…AAHAPFISHP (228 aa). Substrate-binding positions include W22, 82 to 83, and 143 to 147; these read SL and FLALQ. The active-site Nucleophile is the S82. Active-site residues include D207 and H235. H235 is a binding site for substrate.

This sequence belongs to the AB hydrolase superfamily. Carboxylesterase BioH family. As to quaternary structure, monomer.

It localises to the cytoplasm. It catalyses the reaction 6-carboxyhexanoyl-[ACP] methyl ester + H2O = 6-carboxyhexanoyl-[ACP] + methanol + H(+). It participates in cofactor biosynthesis; biotin biosynthesis. In terms of biological role, the physiological role of BioH is to remove the methyl group introduced by BioC when the pimeloyl moiety is complete. It allows to synthesize pimeloyl-ACP via the fatty acid synthetic pathway through the hydrolysis of the ester bonds of pimeloyl-ACP esters. The protein is Pimeloyl-[acyl-carrier protein] methyl ester esterase of Salmonella choleraesuis (strain SC-B67).